The sequence spans 179 residues: Large ribosomal subunit protein uL6 (179 aa).

This sequence belongs to the universal ribosomal protein uL6 family. As to quaternary structure, part of the 50S ribosomal subunit.

In terms of biological role, this protein binds to the 23S rRNA, and is important in its secondary structure. It is located near the subunit interface in the base of the L7/L12 stalk, and near the tRNA binding site of the peptidyltransferase center. The sequence is that of Large ribosomal subunit protein uL6 from Prochlorococcus marinus (strain MIT 9313).